Consider the following 104-residue polypeptide: MQNSQDYFYAQNRCQQQQAPSTLRTVTMAEFRRVPLPPMAEVPMLSTQNSMGSSASASASSLEMWEKDLEERLNSIDHDMNNNKFGSGELKSMFNQGKVEEMDF.

Met-1 bears the N-acetylmethionine mark. A disordered region spans residues 43-62 (PMLSTQNSMGSSASASASSL). Phosphoserine; by DUN1 occurs at positions 56, 58, and 60.

Homodimer; disulfide-linked. Interacts with RNR1. Post-translationally, phosphorylated by DUN1, a downstream effector of the Mec1/Rad53 checkpoint pathway, in response to DNA damage. This promotes ubiquitination of SML1 and targets it for degradation by the 26S proteasome.

It is found in the nucleus. Its subcellular location is the cytoplasm. Strong inhibitor of ribonucleotide reductase (RNR1) and is involved in regulating dNTP production. The sequence is that of Ribonucleotide reductase inhibitor protein SML1 (SML1) from Saccharomyces cerevisiae (strain ATCC 204508 / S288c) (Baker's yeast).